The sequence spans 189 residues: Cytochrome b6-f complex subunit 4 (189 aa).

Helical transmembrane passes span 36–56 (LSYIFPVVILGTIACTIGLAV), 103–123 (LLGVLLMASVPAGSLTVPFLE), and 139–159 (TVSLIGTAVALWLGIGAALPI).

The protein belongs to the cytochrome b family. PetD subfamily. The 4 large subunits of the cytochrome b6-f complex are cytochrome b6, subunit IV (17 kDa polypeptide, petD), cytochrome f and the Rieske protein, while the 4 small subunits are petG, petL, petM and petN. The complex functions as a dimer.

Its subcellular location is the plastid. The protein localises to the chloroplast thylakoid membrane. Functionally, component of the cytochrome b6-f complex, which mediates electron transfer between photosystem II (PSII) and photosystem I (PSI), cyclic electron flow around PSI, and state transitions. The protein is Cytochrome b6-f complex subunit 4 of Pinus koraiensis (Korean pine).